The primary structure comprises 145 residues: Basic phospholipase A2 S11-61 (145 aa).

Residues M1 to A19 form the signal peptide. A propeptide spanning residues S20 to L27 is cleaved from the precursor. Intrachain disulfides connect C38–C98, C54–C144, C56–C72, C71–C125, C78–C118, C87–C111, and C105–C116. Ca(2+) is bound by residues Y55, G57, and G59. H75 is a catalytic residue. Ca(2+) is bound at residue D76. Residue D119 is part of the active site.

Belongs to the phospholipase A2 family. Group I subfamily. D49 sub-subfamily. Requires Ca(2+) as cofactor. As to expression, expressed by the venom gland.

The protein localises to the secreted. It catalyses the reaction a 1,2-diacyl-sn-glycero-3-phosphocholine + H2O = a 1-acyl-sn-glycero-3-phosphocholine + a fatty acid + H(+). Its function is as follows. Snake venom phospholipase A2 (PLA2) that inhibits collagen-induced platelet aggregation. PLA2 catalyzes the calcium-dependent hydrolysis of the 2-acyl groups in 3-sn-phosphoglycerides. The sequence is that of Basic phospholipase A2 S11-61 from Austrelaps superbus (Lowland copperhead snake).